The following is a 230-amino-acid chain: Ribonuclease 3 (230 aa).

The RNase III domain occupies 1 to 134 (MKQLEELLST…FLGALLLDKG (134 aa)). Glutamate 47 contacts Mg(2+). Residue aspartate 51 is part of the active site. 2 residues coordinate Mg(2+): aspartate 120 and glutamate 123. The active site involves glutamate 123. The DRBM domain occupies 160–229 (DYKTCLQEFL…AKNALAQLSE (70 aa)).

Belongs to the ribonuclease III family. As to quaternary structure, homodimer. Mg(2+) serves as cofactor.

The protein resides in the cytoplasm. The enzyme catalyses Endonucleolytic cleavage to 5'-phosphomonoester.. Functionally, digests double-stranded RNA. Involved in the processing of primary rRNA transcript to yield the immediate precursors to the large and small rRNAs (23S and 16S). Processes some mRNAs, and tRNAs when they are encoded in the rRNA operon. Processes pre-crRNA and tracrRNA of type II CRISPR loci if present in the organism. This chain is Ribonuclease 3, found in Streptococcus pyogenes serotype M28 (strain MGAS6180).